The primary structure comprises 586 residues: Arginine--tRNA ligase (586 aa).

The 'HIGH' region motif lies at 131–141 (ANPTGPLHVGH).

The protein belongs to the class-I aminoacyl-tRNA synthetase family. As to quaternary structure, monomer.

It localises to the cytoplasm. It carries out the reaction tRNA(Arg) + L-arginine + ATP = L-arginyl-tRNA(Arg) + AMP + diphosphate. The polypeptide is Arginine--tRNA ligase (Nitrosomonas europaea (strain ATCC 19718 / CIP 103999 / KCTC 2705 / NBRC 14298)).